We begin with the raw amino-acid sequence, 113 residues long: Fruiting body-specific class I hydrophobin fbh1 (113 aa).

Positions 1-23 are cleaved as a signal peptide; sequence MFSIRIATVVLAASAALRPPARI. 4 cysteine pairs are disulfide-bonded: C33-C92, C40-C86, C41-C73, and C93-C106.

Belongs to the fungal hydrophobin family. In terms of assembly, self-assembles to form functional amyloid fibrils called rodlets. Self-assembly into fibrillar rodlets occurs spontaneously at hydrophobic:hydrophilic interfaces and the rodlets further associate laterally to form amphipathic monolayers.

The protein localises to the secreted. The protein resides in the cell wall. Its function is as follows. Aerial growth, conidiation, and dispersal of filamentous fungi in the environment rely upon a capability of their secreting small amphipathic proteins called hydrophobins (HPBs) with low sequence identity. Class I can self-assemble into an outermost layer of rodlet bundles on aerial cell surfaces, conferring cellular hydrophobicity that supports fungal growth, development and dispersal; whereas Class II form highly ordered films at water-air interfaces through intermolecular interactions but contribute nothing to the rodlet structure. Fbh1 is a fruiting body-specific class I hydrophobin that is involved in the growth rate and primordia formation. The sequence is that of Fruiting body-specific class I hydrophobin fbh1 from Pleurotus ostreatus (Oyster mushroom).